The following is a 207-amino-acid chain: MNNLTAIVLAGGQSSRMGQDKALITVQGVPLLQFVCNIAASCADTVYIVTPWPERYEHLFLPGCKFLPEAATQGPLIGFAQGLAEVKSEWVLLLACDLPKLRVEVLQEWAANLDSVPEEAIAALPHHAKGWEPLCGFYRRRCLPQLLEFIHQGGRSFQQWLQHHSVQVLSLPTPEILFNCNTPEDLAVIQGEFDDLSPNPSPTRRGA.

Residues 9 to 11 (LAG), K21, and D97 each bind GTP. D97 serves as a coordination point for Mg(2+).

The protein belongs to the MobA family. It depends on Mg(2+) as a cofactor.

It is found in the cytoplasm. The catalysed reaction is Mo-molybdopterin + GTP + H(+) = Mo-molybdopterin guanine dinucleotide + diphosphate. Functionally, transfers a GMP moiety from GTP to Mo-molybdopterin (Mo-MPT) cofactor (Moco or molybdenum cofactor) to form Mo-molybdopterin guanine dinucleotide (Mo-MGD) cofactor. In Nostoc sp. (strain PCC 7120 / SAG 25.82 / UTEX 2576), this protein is Probable molybdenum cofactor guanylyltransferase.